A 975-amino-acid chain; its full sequence is Protein bicaudal D homolog 1 (975 aa).

2 coiled-coil regions span residues 1–265 (MAAE…HISI) and 319–496 (SELN…IANE). 5 disordered regions span residues 383–403 (SSKE…GEEA), 545–616 (RSGS…LDTS), 800–824 (DHEQ…VSGE), 836–877 (LLHS…ASYL), and 922–975 (DCQQ…PPHP). Composition is skewed to basic and acidic residues over residues 385–403 (KELK…GEEA) and 581–590 (VAKESTEASK). The segment covering 592-602 (PSPTKTPTISP) has biased composition (polar residues). Positions 663 to 803 (IDKDKEALME…LEDLEFDHEQ (141 aa)) form a coiled coil. Positions 663-803 (IDKDKEALME…LEDLEFDHEQ (141 aa)) are interaction with RAB6A. The span at 840 to 877 (QGPQTPNIRVSSGTQRKRQFSPSLCDQSRPRTSGASYL) shows a compositional bias: polar residues.

It belongs to the BicD family. In terms of assembly, interacts with RAB6A. Interacts (via C-terminus) with RAB6B (GTP-bound); the interaction is direct. Interacts with CLIP-115 and KIFC2. (Microbial infection) Interacts with human cytomegalovirus/HHV-5 protein UL32. As to expression, expressed in the brain, heart and skeletal muscle.

The protein localises to the golgi apparatus. Functionally, regulates coat complex coatomer protein I (COPI)-independent Golgi-endoplasmic reticulum transport by recruiting the dynein-dynactin motor complex. This is Protein bicaudal D homolog 1 (BICD1) from Homo sapiens (Human).